The primary structure comprises 283 residues: 4-diphosphocytidyl-2-C-methyl-D-erythritol kinase (283 aa).

The active site involves lysine 10. 99 to 109 (PMGGGLGGGSS) contacts ATP. Aspartate 141 is an active-site residue.

It belongs to the GHMP kinase family. IspE subfamily. As to quaternary structure, homodimer.

The enzyme catalyses 4-CDP-2-C-methyl-D-erythritol + ATP = 4-CDP-2-C-methyl-D-erythritol 2-phosphate + ADP + H(+). It functions in the pathway isoprenoid biosynthesis; isopentenyl diphosphate biosynthesis via DXP pathway; isopentenyl diphosphate from 1-deoxy-D-xylulose 5-phosphate: step 3/6. In terms of biological role, catalyzes the phosphorylation of the position 2 hydroxy group of 4-diphosphocytidyl-2C-methyl-D-erythritol. This is 4-diphosphocytidyl-2-C-methyl-D-erythritol kinase from Escherichia coli O7:K1 (strain IAI39 / ExPEC).